Here is a 327-residue protein sequence, read N- to C-terminus: Interleukin-12 subunit beta (327 aa).

The signal sequence occupies residues 1–22; the sequence is MCHQKLTISWFAMVLLVSPLMA. The Ig-like C2-type domain maps to 23-106; it reads IWELEKDVYV…LSHSRLLLHK (84 aa). A disulfide bond links Cys50 and Cys90. Residues Asn125, Asn135, Asn223, and Asn315 are each glycosylated (N-linked (GlcNAc...) asparagine). The Fibronectin type-III domain maps to 238 to 327; sequence PPKNLQLKPL…WSEWASVSCN (90 aa).

This sequence belongs to the IL-12B family. In terms of assembly, heterodimer with IL12A; disulfide-linked. The heterodimer is known as interleukin IL-12. Heterodimer with IL23A; disulfide-linked. The heterodimer is known as interleukin IL-23. Also secreted as a monomer. Interacts with NBR1; this interaction promotes IL-12 secretion.

Its subcellular location is the secreted. Cytokine that can act as a growth factor for activated T and NK cells, enhance the lytic activity of NK/lymphokine-activated killer cells, and stimulate the production of IFN-gamma by resting PBMC. Functionally, associates with IL23A to form the IL-23 interleukin, a heterodimeric cytokine which functions in innate and adaptive immunity. IL-23 may constitute with IL-17 an acute response to infection in peripheral tissues. IL-23 binds to a heterodimeric receptor complex composed of IL12RB1 and IL23R, activates the Jak-Stat signaling cascade, stimulates memory rather than naive T-cells and promotes production of pro-inflammatory cytokines. IL-23 induces autoimmune inflammation and thus may be responsible for autoimmune inflammatory diseases and may be important for tumorigenesis. The chain is Interleukin-12 subunit beta (IL12B) from Sigmodon hispidus (Hispid cotton rat).